A 113-amino-acid chain; its full sequence is TYRO protein tyrosine kinase-binding protein (113 aa).

An N-terminal signal peptide occupies residues 1–27 (MGGLEPCSRLLLLPLLLAVGGLRPVQA). The Extracellular portion of the chain corresponds to 28–40 (QAQSDCSCSTVSP). Residues 41 to 61 (GVLAGIVLGDLVLTVLIALAV) form a helical membrane-spanning segment. Residue Asp-50 coordinates Ca(2+). Over 62–113 (YFLGRLVPRGRGAAEAATRKQRITETESPYQELQGQRSDVYSDLNTQRPYYK) the chain is Cytoplasmic. Residues 75–113 (AEAATRKQRITETESPYQELQGQRSDVYSDLNTQRPYYK) are disordered. One can recognise an ITAM domain in the interval 80-108 (RKQRITETESPYQELQGQRSDVYSDLNTQ). A compositionally biased stretch (polar residues) spans 87–113 (TESPYQELQGQRSDVYSDLNTQRPYYK). Phosphotyrosine is present on residues Tyr-91 and Tyr-102.

Belongs to the TYROBP family. As to quaternary structure, homodimer; disulfide-linked. Homotrimer; disulfide-linked. Homotetramer; disulfide-linked. Homotrimers and homotetramers form when low levels of partner receptors are available and is competitive with assembly with interacting receptors. They may represent alternative oligomerization states or may be intermediates in the receptor assembly process. Binding of a metal cation aids in homooligomerization through coordination of the metal ion by the subunits of the oligomer. Interacts with TREM1. Interacts with TREM2. Interacts with CLECSF5. Interacts with CD300LB and CD300C2. Interacts with CD300E. Interacts (via ITAM domain) with SYK (via SH2 domains); activates SYK mediating neutrophils and macrophages integrin-mediated activation. Interacts with KLRC2. Interacts with CD300H. Interacts with KLRD1. In terms of processing, following ligand binding by associated receptors, tyrosine phosphorylated in the ITAM domain which leads to activation of additional tyrosine kinases and subsequent cell activation.

The protein resides in the cell membrane. Functionally, adapter protein which non-covalently associates with activating receptors found on the surface of a variety of immune cells to mediate signaling and cell activation following ligand binding by the receptors. TYROBP is tyrosine-phosphorylated in the ITAM domain following ligand binding by the associated receptors which leads to activation of additional tyrosine kinases and subsequent cell activation. Also has an inhibitory role in some cells. Non-covalently associates with activating receptors of the CD300 family to mediate cell activation. Also mediates cell activation through association with activating receptors of the CD200R family. Required for neutrophil activation mediated by integrin. Required for the activation of myeloid cells mediated by the CLEC5A/MDL1 receptor. Associates with natural killer (NK) cell receptors such as the KLRD1/KLRC2 heterodimer to mediate NK cell activation. Associates with TREM1 to mediate activation of neutrophils and monocytes. Associates with TREM2 on monocyte-derived dendritic cells to mediate up-regulation of chemokine receptor CCR7 and dendritic cell maturation and survival. Association with TREM2 mediates cytokine-induced formation of multinucleated giant cells which are formed by the fusion of macrophages. Stabilizes the TREM2 C-terminal fragment (TREM2-CTF) produced by TREM2 ectodomain shedding which suppresses the release of pro-inflammatory cytokines. In microglia, required with TREM2 for phagocytosis of apoptotic neurons. Required with ITGAM/CD11B in microglia to control production of microglial superoxide ions which promote the neuronal apoptosis that occurs during brain development. Promotes pro-inflammatory responses in microglia following nerve injury which accelerates degeneration of injured neurons. Positively regulates the expression of the IRAK3/IRAK-M kinase and IL10 production by liver dendritic cells and inhibits their T cell allosimulatory ability. Negatively regulates B cell proliferation. Required for CSF1-mediated osteoclast cytoskeletal organization. Positively regulates multinucleation during osteoclast development. The chain is TYRO protein tyrosine kinase-binding protein from Macaca mulatta (Rhesus macaque).